We begin with the raw amino-acid sequence, 236 residues long: Purine nucleoside phosphorylase DeoD-type 1 (236 aa).

An a purine D-ribonucleoside-binding site is contributed by His5. Residues Gly21, Arg25, Arg44, and 88–91 each bind phosphate; that span reads RVGS. Residues 180-182 and 204-205 each bind a purine D-ribonucleoside; these read EME and TD. Residue Asp205 is the Proton donor of the active site.

It belongs to the PNP/UDP phosphorylase family. In terms of assembly, homohexamer; trimer of homodimers.

The enzyme catalyses a purine D-ribonucleoside + phosphate = a purine nucleobase + alpha-D-ribose 1-phosphate. The catalysed reaction is a purine 2'-deoxy-D-ribonucleoside + phosphate = a purine nucleobase + 2-deoxy-alpha-D-ribose 1-phosphate. Its function is as follows. Catalyzes the reversible phosphorolytic breakdown of the N-glycosidic bond in the beta-(deoxy)ribonucleoside molecules, with the formation of the corresponding free purine bases and pentose-1-phosphate. The protein is Purine nucleoside phosphorylase DeoD-type 1 of Shewanella oneidensis (strain ATCC 700550 / JCM 31522 / CIP 106686 / LMG 19005 / NCIMB 14063 / MR-1).